The sequence spans 270 residues: Interleukin-1 beta (270 aa).

Positions 1-118 (MARVPEPTSE…KCDDNAFVHD (118 aa)) are excised as a propeptide.

The protein belongs to the IL-1 family. In terms of assembly, monomer. In its precursor form, weakly interacts with full-length MEFV; the mature cytokine does not interact at all. Interacts with integrins ITGAV:ITGBV and ITGA5:ITGB1; integrin-binding is required for IL1B signaling. Interacts with cargo receptor TMED10; the interaction is direct and is required for the secretion of IL1B mature form. Interacts with HSP90AB1; the interaction facilitates cargo translocation into the ERGIC. Interacts with HSP90B1; the interaction facilitates cargo translocation into the ERGIC.

The protein resides in the cytoplasm. Its subcellular location is the cytosol. It is found in the secreted. The protein localises to the lysosome. It localises to the extracellular exosome. Potent pro-inflammatory cytokine. Initially discovered as the major endogenous pyrogen, induces prostaglandin synthesis, neutrophil influx and activation, T-cell activation and cytokine production, B-cell activation and antibody production, and fibroblast proliferation and collagen production. Promotes Th17 differentiation of T-cells. Synergizes with IL12/interleukin-12 to induce IFNG synthesis from T-helper 1 (Th1) cells. Plays a role in angiogenesis by inducing VEGF production synergistically with TNF and IL6. Involved in transduction of inflammation downstream of pyroptosis: its mature form is specifically released in the extracellular milieu by passing through the gasdermin-D (GSDMD) pore. The protein is Interleukin-1 beta (IL1B) of Mustela putorius furo (European domestic ferret).